Here is a 532-residue protein sequence, read N- to C-terminus: tRNA-2-methylthio-N(6)-dimethylallyladenosine synthase (532 aa).

A disordered region spans residues 1-21 (MTSTVAHGAGSAGPADDVEPM). Residues 24 to 140 (RTYQVRTYGC…LPALLDRARH (117 aa)) form the MTTase N-terminal domain. Cysteine 33, cysteine 69, cysteine 103, cysteine 177, cysteine 181, and cysteine 184 together coordinate [4Fe-4S] cluster. The 237-residue stretch at 163 to 399 (RESAYAAWVS…VELQEQISLE (237 aa)) folds into the Radical SAM core domain. One can recognise a TRAM domain in the interval 402-470 (RAIVGQRVEL…PHHLIADGGI (69 aa)). Positions 510–532 (TSCGSAGGCGSADGAGSSAGDPQ) are disordered. Positions 523 to 532 (GAGSSAGDPQ) are enriched in low complexity.

The protein belongs to the methylthiotransferase family. MiaB subfamily. Monomer. Requires [4Fe-4S] cluster as cofactor.

Its subcellular location is the cytoplasm. It carries out the reaction N(6)-dimethylallyladenosine(37) in tRNA + (sulfur carrier)-SH + AH2 + 2 S-adenosyl-L-methionine = 2-methylsulfanyl-N(6)-dimethylallyladenosine(37) in tRNA + (sulfur carrier)-H + 5'-deoxyadenosine + L-methionine + A + S-adenosyl-L-homocysteine + 2 H(+). Catalyzes the methylthiolation of N6-(dimethylallyl)adenosine (i(6)A), leading to the formation of 2-methylthio-N6-(dimethylallyl)adenosine (ms(2)i(6)A) at position 37 in tRNAs that read codons beginning with uridine. This is tRNA-2-methylthio-N(6)-dimethylallyladenosine synthase from Mycobacterium ulcerans (strain Agy99).